Reading from the N-terminus, the 535-residue chain is Dual specificity calcium/calmodulin-dependent 3',5'-cyclic nucleotide phosphodiesterase 1B (535 aa).

Positions 1-21 (MELSPRSPPEMLESDCPSPLE) are disordered. Phosphoserine occurs at positions 7 and 14. 2 calmodulin-binding regions span residues 27-47 (SKKMWIKLRSLLRYMVKQLEN) and 117-140 (EKPKFRSIVHAVQAGIFVERMFRR). The PDEase domain occupies 145 to 502 (VGPTYSTAVH…QKWKERAASG (358 aa)). The Proton donor role is filled by H222. 4 residues coordinate Zn(2+): H226, H262, D263, and D369. Residue D263 coordinates Mg(2+). Disordered regions lie at residues 444-474 (QPLADDDSKPKSQPSFQWRQPSLDVDVGDPN) and 495-535 (WKER…GNLD). Over residues 454–463 (KSQPSFQWRQ) the composition is skewed to polar residues. Phosphoserine is present on residues S465 and S513.

This sequence belongs to the cyclic nucleotide phosphodiesterase family. PDE1 subfamily. In terms of assembly, homodimer. Requires Zn(2+) as cofactor. Mg(2+) is required as a cofactor.

Its subcellular location is the cytoplasm. It localises to the cytosol. It catalyses the reaction a nucleoside 3',5'-cyclic phosphate + H2O = a nucleoside 5'-phosphate + H(+). The catalysed reaction is 3',5'-cyclic GMP + H2O = GMP + H(+). It carries out the reaction 3',5'-cyclic AMP + H2O = AMP + H(+). Type I PDE are activated by the binding of calmodulin in the presence of Ca(2+). Functionally, cyclic nucleotide phosphodiesterase with a dual specificity for the second messengers cAMP and cGMP, which are key regulators of many important physiological processes. Has a preference for cGMP as a substrate. This is Dual specificity calcium/calmodulin-dependent 3',5'-cyclic nucleotide phosphodiesterase 1B from Mus musculus (Mouse).